We begin with the raw amino-acid sequence, 417 residues long: Phosphoglycerate kinase (417 aa).

(2R)-3-phosphoglycerate is bound by residues valine 23, aspartate 24, phenylalanine 25, asparagine 26, glutamine 38, arginine 39, serine 62, histidine 63, glycine 65, arginine 66, leucine 121, arginine 122, histidine 169, and arginine 170. Glycine 213 contributes to the ADP binding site. CDP is bound at residue glycine 213. Residues alanine 214 and lysine 215 each coordinate AMP. Alanine 214 contributes to the ATP binding site. Residue alanine 214 participates in Mg(2+) binding. CDP is bound at residue aspartate 218. Position 218 (aspartate 218) interacts with Mg(2+). Lysine 219 lines the AMP pocket. Lysine 219 provides a ligand contact to ATP. Glycine 237 contacts ADP. Glycine 237 serves as a coordination point for CDP. AMP is bound by residues glycine 238 and glycine 312. Glycine 238 and glycine 312 together coordinate ATP. The CDP site is built by glycine 337 and phenylalanine 342. Phenylalanine 342 contacts ADP. Position 343 (glutamate 343) interacts with AMP. 3 residues coordinate ATP: glutamate 343, aspartate 374, and threonine 375. Residue aspartate 374 coordinates Mg(2+).

This sequence belongs to the phosphoglycerate kinase family. Monomer. Mg(2+) is required as a cofactor.

It is found in the cytoplasm. It localises to the mitochondrion. It carries out the reaction (2R)-3-phosphoglycerate + ATP = (2R)-3-phospho-glyceroyl phosphate + ADP. Its pathway is carbohydrate degradation; glycolysis; pyruvate from D-glyceraldehyde 3-phosphate: step 2/5. In terms of biological role, catalyzes one of the two ATP producing reactions in the glycolytic pathway via the reversible conversion of 1,3-diphosphoglycerate to 3-phosphoglycerate. Both L- and D- forms of purine and pyrimidine nucleotides can be used as substrates, but the activity is much lower on pyrimidines. Negatively regulates the biosynthesis of acetyl-CoA from pyruvate in the mitochondrion. This is Phosphoglycerate kinase (PGK1) from Candida maltosa (Yeast).